The primary structure comprises 636 residues: Rust resistance kinase Lr10 (636 aa).

Positions 1–24 (MSKLLVIALLLLPLINHGIYLATA) are cleaved as a signal peptide. Topologically, residues 25–276 (WDDQDFFKYC…MPDPHGSHIK (252 aa)) are extracellular. 3 N-linked (GlcNAc...) asparagine glycosylation sites follow: asparagine 56, asparagine 177, and asparagine 222. The helical transmembrane segment at 277-297 (VIAATSSVAAFVALLLTVATV) threads the bilayer. Residues 298-636 (LYLSLKTRYN…FVSSENELMS (339 aa)) lie on the Cytoplasmic side of the membrane. One can recognise a Protein kinase domain in the interval 339–628 (RRFKEKVGQG…SLQMPPKPFV (290 aa)). ATP is bound by residues 345-353 (VGQGGFGSV) and lysine 367. Aspartate 466 functions as the Proton acceptor in the catalytic mechanism.

It belongs to the protein kinase superfamily. Ser/Thr protein kinase family. Specifically expressed in the aerial parts of the plant.

It is found in the cell membrane. It catalyses the reaction L-seryl-[protein] + ATP = O-phospho-L-seryl-[protein] + ADP + H(+). It carries out the reaction L-threonyl-[protein] + ATP = O-phospho-L-threonyl-[protein] + ADP + H(+). The chain is Rust resistance kinase Lr10 from Triticum aestivum (Wheat).